A 146-amino-acid chain; its full sequence is Tol-Pal system protein TolR (146 aa).

Residues 16–36 (VVPYIDVMLVLLVIFMVTAPM) traverse the membrane as a helical segment.

The protein belongs to the ExbD/TolR family. The Tol-Pal system is composed of five core proteins: the inner membrane proteins TolA, TolQ and TolR, the periplasmic protein TolB and the outer membrane protein Pal. They form a network linking the inner and outer membranes and the peptidoglycan layer.

It localises to the cell inner membrane. Part of the Tol-Pal system, which plays a role in outer membrane invagination during cell division and is important for maintaining outer membrane integrity. The protein is Tol-Pal system protein TolR of Pseudomonas aeruginosa (strain ATCC 15692 / DSM 22644 / CIP 104116 / JCM 14847 / LMG 12228 / 1C / PRS 101 / PAO1).